The primary structure comprises 328 residues: Cell division protein ZipA (328 aa).

The Periplasmic portion of the chain corresponds to 1–4; that stretch reads MDLN. A helical transmembrane segment spans residues 5 to 25; it reads TILIIVGIVALVALIVHGLWS. Residues 26 to 328 lie on the Cytoplasmic side of the membrane; sequence NRREKSKYFD…NAEQAYLARV (303 aa). The interval 44–82 is disordered; sequence SLTSRSHTQEEMVQPNNISPNTYVENGHTPISQPTTEKL. Polar residues predominate over residues 57 to 81; that stretch reads QPNNISPNTYVENGHTPISQPTTEK.

Belongs to the ZipA family. As to quaternary structure, interacts with FtsZ via their C-terminal domains.

Its subcellular location is the cell inner membrane. In terms of biological role, essential cell division protein that stabilizes the FtsZ protofilaments by cross-linking them and that serves as a cytoplasmic membrane anchor for the Z ring. Also required for the recruitment to the septal ring of downstream cell division proteins. In Haemophilus influenzae (strain PittGG), this protein is Cell division protein ZipA.